Reading from the N-terminus, the 449-residue chain is Methionine aminopeptidase 2 (449 aa).

A disordered region spans residues 1 to 91 (MAAQAAPELA…PRIPLTTLFP (91 aa)). A compositionally biased stretch (acidic residues) spans 34 to 50 (EEAENEGDSEDDRDDEQ). Basic residues predominate over residues 61-75 (KKKKKKRPKKKKKTA). Residue His-199 participates in substrate binding. Asp-219, Asp-230, and His-299 together coordinate a divalent metal cation. His-307 is a binding site for substrate. Residues Glu-335 and Glu-430 each coordinate a divalent metal cation.

Belongs to the peptidase M24A family. Methionine aminopeptidase eukaryotic type 2 subfamily. Co(2+) is required as a cofactor. The cofactor is Zn(2+). Mn(2+) serves as cofactor. Requires Fe(2+) as cofactor.

The protein localises to the cytoplasm. It catalyses the reaction Release of N-terminal amino acids, preferentially methionine, from peptides and arylamides.. In terms of biological role, cotranslationally removes the N-terminal methionine from nascent proteins. The N-terminal methionine is often cleaved when the second residue in the primary sequence is small and uncharged (Met-Ala-, Cys, Gly, Pro, Ser, Thr, or Val). This Trichophyton verrucosum (strain HKI 0517) protein is Methionine aminopeptidase 2.